The following is an 845-amino-acid chain: Poly(A) RNA polymerase gld-4 (845 aa).

The disordered stretch occupies residues 1-55 (MNEDSRLSSSQQPSTSTPRSSIPSTMNSDEPNTCRRLSQSQEQPSTSRTCKSETP). A compositionally biased stretch (low complexity) spans 7-25 (LSSSQQPSTSTPRSSIPST). Positions 26-49 (MNSDEPNTCRRLSQSQEQPSTSRT) are enriched in polar residues. 2 residues coordinate Mg(2+): Asp-139 and Asp-141. Residues 276-335 (NLGHLLLRFLELYSLEFNFEEMGISPGQCCYIPKSASGARYGHKQAQPGNLALEDPLLTA) form the PAP-associated domain. Basic and acidic residues predominate over residues 482–506 (KSLEKMPACDDNKKEEELVATRETD). Disordered regions lie at residues 482-733 (KSLE…SEEP) and 788-845 (NALT…RLQR). The span at 535–551 (TSTQSVNTSATVSTAAS) shows a compositional bias: low complexity. Composition is skewed to polar residues over residues 561–571 (PGLSSSMGNQS) and 579–588 (GINNRNNSAV). A compositionally biased stretch (basic and acidic residues) spans 605 to 620 (RESKRTQTTSEDKMQD). The segment covering 643-653 (SHKHRNAHPQR) has biased composition (basic residues). Polar residues-rich tracts occupy residues 654–666 (QRPS…QGSD), 695–732 (RQQT…SSEE), 788–805 (NALT…TSMQ), and 819–828 (DNNSATSSTD).

As to quaternary structure, interacts with gls-1 isoform C. Requires Mg(2+) as cofactor. It depends on Mn(2+) as a cofactor. In terms of tissue distribution, germline-specific.

The protein resides in the cytoplasm. It localises to the cytoplasmic granule. It is found in the perinuclear region. The catalysed reaction is RNA(n) + ATP = RNA(n)-3'-adenine ribonucleotide + diphosphate. Functionally, cytoplasmic poly(A) RNA polymerase that adds successive AMP monomers to the 3'-end of specific RNAs, forming a poly(A) tail. The enzymatic activity is enhanced by its interaction with gls-1. Required, together with gld-2, for early meiotic progression in male and female germ cells and for gld-1 protein accumulation in the hermaphrodite germline. In the germline, forms a complex with gls-1 which directly binds to gld-1 mRNA and prevents its degradation. The sequence is that of Poly(A) RNA polymerase gld-4 from Caenorhabditis elegans.